A 125-amino-acid polypeptide reads, in one-letter code: Holo-[acyl-carrier-protein] synthase (125 aa).

The Mg(2+) site is built by aspartate 6 and glutamate 55.

This sequence belongs to the P-Pant transferase superfamily. AcpS family. The cofactor is Mg(2+).

It is found in the cytoplasm. The catalysed reaction is apo-[ACP] + CoA = holo-[ACP] + adenosine 3',5'-bisphosphate + H(+). In terms of biological role, transfers the 4'-phosphopantetheine moiety from coenzyme A to a Ser of acyl-carrier-protein. The chain is Holo-[acyl-carrier-protein] synthase from Chlorobium phaeovibrioides (strain DSM 265 / 1930) (Prosthecochloris vibrioformis (strain DSM 265)).